Consider the following 494-residue polypeptide: Cytochrome P450 71D94 (494 aa).

Residues 1 to 21 traverse the membrane as a helical; Signal-anchor for type II membrane protein segment; the sequence is MELNLLLVIIILVATYTVSLL. Cys434 serves as a coordination point for heme.

The protein belongs to the cytochrome P450 family. The cofactor is heme.

The protein localises to the endoplasmic reticulum membrane. Cytochrome P450 oxygenase of undefined substrate. Not active with limonene, (+)- or (-)-piperitone, (-)-isopiperitone, piperitenone or (+)-pulegone. This chain is Cytochrome P450 71D94 (CYP71D94), found in Mentha gracilis (Gingermint).